We begin with the raw amino-acid sequence, 473 residues long: Trigger factor (473 aa).

Positions 174-261 constitute a PPIase FKBP-type domain; the sequence is GDIAVVSFKG…LKDLKEKELP (88 aa). Residues 442-473 are disordered; sequence ATKLTTKTTTKATTKKGVKTKSKPKVNKKEKN. Low complexity predominate over residues 444–453; it reads KLTTKTTTKA. The span at 454-467 shows a compositional bias: basic residues; sequence TTKKGVKTKSKPKV.

Belongs to the FKBP-type PPIase family. Tig subfamily.

The protein resides in the cytoplasm. The catalysed reaction is [protein]-peptidylproline (omega=180) = [protein]-peptidylproline (omega=0). Its function is as follows. Involved in protein export. Acts as a chaperone by maintaining the newly synthesized protein in an open conformation. Functions as a peptidyl-prolyl cis-trans isomerase. The polypeptide is Trigger factor (Prochlorococcus marinus subsp. pastoris (strain CCMP1986 / NIES-2087 / MED4)).